The primary structure comprises 376 residues: N-acetyldiaminopimelate deacetylase (376 aa).

The active site involves Asp-69. Glu-128 (proton acceptor) is an active-site residue.

The protein belongs to the peptidase M20A family. N-acetyldiaminopimelate deacetylase subfamily.

It carries out the reaction N-acetyl-(2S,6S)-2,6-diaminopimelate + H2O = (2S,6S)-2,6-diaminopimelate + acetate. Its pathway is amino-acid biosynthesis; L-lysine biosynthesis via DAP pathway; LL-2,6-diaminopimelate from (S)-tetrahydrodipicolinate (acetylase route): step 3/3. Catalyzes the conversion of N-acetyl-diaminopimelate to diaminopimelate and acetate. The chain is N-acetyldiaminopimelate deacetylase from Bacillus mycoides (strain KBAB4) (Bacillus weihenstephanensis).